Consider the following 311-residue polypeptide: Pyrimidine-specific ribonucleoside hydrolase RihA (311 aa).

Residue His-240 is part of the active site.

This sequence belongs to the IUNH family. RihA subfamily.

In terms of biological role, hydrolyzes with equal efficiency cytidine or uridine to ribose and cytosine or uracil, respectively. The protein is Pyrimidine-specific ribonucleoside hydrolase RihA of Escherichia coli (strain SMS-3-5 / SECEC).